The following is a 306-amino-acid chain: Recombination-associated protein RdgC (306 aa).

It belongs to the RdgC family.

It is found in the cytoplasm. It localises to the nucleoid. In terms of biological role, may be involved in recombination. In Pseudomonas putida (strain ATCC 47054 / DSM 6125 / CFBP 8728 / NCIMB 11950 / KT2440), this protein is Recombination-associated protein RdgC.